A 266-amino-acid chain; its full sequence is uncharacterized protein (266 aa).

Ser176 carries the phosphoserine modification. Thr178 carries the post-translational modification Phosphothreonine.

This is an uncharacterized protein from Schizosaccharomyces pombe (strain 972 / ATCC 24843) (Fission yeast).